A 499-amino-acid chain; its full sequence is Probable cytosol aminopeptidase (499 aa).

Residues K263 and D268 each contribute to the Mn(2+) site. Residue K275 is part of the active site. Residues D286, D345, and E347 each contribute to the Mn(2+) site. R349 is a catalytic residue.

Belongs to the peptidase M17 family. Mn(2+) is required as a cofactor.

Its subcellular location is the cytoplasm. It carries out the reaction Release of an N-terminal amino acid, Xaa-|-Yaa-, in which Xaa is preferably Leu, but may be other amino acids including Pro although not Arg or Lys, and Yaa may be Pro. Amino acid amides and methyl esters are also readily hydrolyzed, but rates on arylamides are exceedingly low.. The enzyme catalyses Release of an N-terminal amino acid, preferentially leucine, but not glutamic or aspartic acids.. In terms of biological role, presumably involved in the processing and regular turnover of intracellular proteins. Catalyzes the removal of unsubstituted N-terminal amino acids from various peptides. The sequence is that of Probable cytosol aminopeptidase (pepA) from Chlamydia trachomatis serovar D (strain ATCC VR-885 / DSM 19411 / UW-3/Cx).